The chain runs to 128 residues: Fluoride-specific ion channel FluC (128 aa).

Transmembrane regions (helical) follow at residues 5-25, 35-55, 67-87, and 96-116; these read IVAI…LALA, LGTL…AVVF, LFVI…SVEV, and FGWA…LTAL. Na(+) contacts are provided by Gly-75 and Thr-78.

This sequence belongs to the fluoride channel Fluc/FEX (TC 1.A.43) family.

It is found in the cell inner membrane. It carries out the reaction fluoride(in) = fluoride(out). Na(+) is not transported, but it plays an essential structural role and its presence is essential for fluoride channel function. Its function is as follows. Fluoride-specific ion channel. Important for reducing fluoride concentration in the cell, thus reducing its toxicity. In Burkholderia ambifaria (strain MC40-6), this protein is Fluoride-specific ion channel FluC.